Reading from the N-terminus, the 396-residue chain is Elongation factor Tu (396 aa).

Residues 10-206 enclose the tr-type G domain; that stretch reads KPHVNIGTIG…AVDNYIPEPE (197 aa). The tract at residues 19–26 is G1; it reads GHVDHGKT. 19-26 is a binding site for GTP; the sequence is GHVDHGKT. Thr-26 is a Mg(2+) binding site. The segment at 60 to 64 is G2; that stretch reads GITIA. The segment at 81–84 is G3; sequence DCPG. Residues 81 to 85 and 136 to 139 contribute to the GTP site; these read DCPGH and NKAD. Residues 136 to 139 are G4; that stretch reads NKAD. The G5 stretch occupies residues 174-176; that stretch reads SAL.

The protein belongs to the TRAFAC class translation factor GTPase superfamily. Classic translation factor GTPase family. EF-Tu/EF-1A subfamily. As to quaternary structure, monomer.

It is found in the cytoplasm. The enzyme catalyses GTP + H2O = GDP + phosphate + H(+). GTP hydrolase that promotes the GTP-dependent binding of aminoacyl-tRNA to the A-site of ribosomes during protein biosynthesis. This chain is Elongation factor Tu, found in Geobacter sulfurreducens (strain ATCC 51573 / DSM 12127 / PCA).